Here is a 310-residue protein sequence, read N- to C-terminus: Conjugation stage-specific protein (310 aa).

The protein belongs to the archaeal Rpo3/eukaryotic RPB3 RNA polymerase subunit family.

It is found in the nucleus. Functionally, may be a stage-specific RNA polymerase subunit. This chain is Conjugation stage-specific protein (CNJC), found in Tetrahymena thermophila.